The chain runs to 70 residues: Melittin-N (70 aa).

The first 21 residues, 1 to 21 (MKFLVNVALVFMVVYISYIYA), serve as a signal peptide directing secretion. A propeptide spans 22–43 (APEPEPAPEPEAEADAEADPEA) (removed by a dipeptidylpeptidase). N-formylglycine; partial is present on Gly-44. The residue at position 69 (Gln-69) is a Glutamine amide.

The protein belongs to the melittin family. As to quaternary structure, monomer (in solution and for integration into membranes), homotetramer (in solution and potentially as a toroidal pore in membranes), and potenially homomultimer (as a toroidal pore in membranes). Expressed by the venom gland.

The protein resides in the secreted. It localises to the target cell membrane. In terms of biological role, main toxin of bee venom with strong hemolytic activity and antimicrobial activity. It has enhancing effects on bee venom phospholipase A2 activity. This amphipathic toxin binds to negatively charged membrane surface and forms pore by inserting into lipid bilayers inducing the leakage of ions and molecules and the enhancement of permeability that ultimately leads to cell lysis. It acts as a voltage-gated pore with higher selectivity for anions over cations. The ion conductance has been shown to be voltage-dependent. Self-association of melittin in membranes is promoted by high ionic strength, but not by the presence of negatively charged lipids. In vivo, intradermal injection into healthy human volunteers produce sharp pain sensation and an inflammatory response. It produces pain by activating primary nociceptor cells directly and indirectly due to its ability to activate plasma membrane phospholipase A2 and its pore-forming activity. Shows lower cytotoxicity when tested on E.coli and cancer cell lines than melittin, as well as lower anti-inflammatory properties and lower properties to interact to small unilamellar liposomes. In Apis cerana (Indian honeybee), this protein is Melittin-N (MELT).